The sequence spans 181 residues: Ribonuclease HII (181 aa).

Positions 1 to 181 (MICGIDEVGR…SLHRKNFKLI (181 aa)) constitute an RNase H type-2 domain. A divalent metal cation contacts are provided by Asp6, Glu7, and Asp98.

It belongs to the RNase HII family. It depends on Mn(2+) as a cofactor. Mg(2+) is required as a cofactor.

Its subcellular location is the cytoplasm. It catalyses the reaction Endonucleolytic cleavage to 5'-phosphomonoester.. In terms of biological role, endonuclease that specifically degrades the RNA of RNA-DNA hybrids. The sequence is that of Ribonuclease HII from Borreliella burgdorferi (strain ZS7) (Borrelia burgdorferi).